The following is a 217-amino-acid chain: Adenylate kinase (217 aa).

10 to 15 (GAGKGT) is a binding site for ATP. Residues 30 to 59 (STGDMFRAAMKNETELGLKAKSYMDAGELV) form an NMP region. AMP contacts are provided by residues Thr-31, Arg-36, 57-59 (ELV), 85-88 (GFPR), and Gln-92. Residues 126-163 (GRRVSPTSGRTYHVIFNPPKVEGICDVDGSELIQRDDD) form an LID region. Residues Arg-127 and 136–137 (TY) contribute to the ATP site. Positions 160 and 171 each coordinate AMP. Residue Gln-199 coordinates ATP.

Belongs to the adenylate kinase family. In terms of assembly, monomer.

It is found in the cytoplasm. It catalyses the reaction AMP + ATP = 2 ADP. It functions in the pathway purine metabolism; AMP biosynthesis via salvage pathway; AMP from ADP: step 1/1. Catalyzes the reversible transfer of the terminal phosphate group between ATP and AMP. Plays an important role in cellular energy homeostasis and in adenine nucleotide metabolism. The chain is Adenylate kinase from Halalkalibacterium halodurans (strain ATCC BAA-125 / DSM 18197 / FERM 7344 / JCM 9153 / C-125) (Bacillus halodurans).